The primary structure comprises 77 residues: Translation initiation factor IF-1, chloroplastic (77 aa).

Positions M1–R71 constitute an S1-like domain.

Belongs to the IF-1 family. In terms of assembly, component of the 30S ribosomal translation pre-initiation complex which assembles on the 30S ribosome in the order IF-2 and IF-3, IF-1 and N-formylmethionyl-tRNA(fMet); mRNA recruitment can occur at any time during PIC assembly.

It localises to the plastid. Its subcellular location is the chloroplast. In terms of biological role, one of the essential components for the initiation of protein synthesis. Stabilizes the binding of IF-2 and IF-3 on the 30S subunit to which N-formylmethionyl-tRNA(fMet) subsequently binds. Helps modulate mRNA selection, yielding the 30S pre-initiation complex (PIC). Upon addition of the 50S ribosomal subunit IF-1, IF-2 and IF-3 are released leaving the mature 70S translation initiation complex. The polypeptide is Translation initiation factor IF-1, chloroplastic (Hedera helix (English ivy)).